We begin with the raw amino-acid sequence, 618 residues long: 1-deoxy-D-xylulose-5-phosphate synthase (618 aa).

Thiamine diphosphate is bound by residues His70 and 111–113 (GHS). Asp142 contacts Mg(2+). Residues 143–144 (GS), Asn171, Tyr278, and Glu360 contribute to the thiamine diphosphate site. Asn171 is a binding site for Mg(2+).

The protein belongs to the transketolase family. DXPS subfamily. As to quaternary structure, homodimer. Mg(2+) is required as a cofactor. The cofactor is thiamine diphosphate.

The enzyme catalyses D-glyceraldehyde 3-phosphate + pyruvate + H(+) = 1-deoxy-D-xylulose 5-phosphate + CO2. The protein operates within metabolic intermediate biosynthesis; 1-deoxy-D-xylulose 5-phosphate biosynthesis; 1-deoxy-D-xylulose 5-phosphate from D-glyceraldehyde 3-phosphate and pyruvate: step 1/1. Catalyzes the acyloin condensation reaction between C atoms 2 and 3 of pyruvate and glyceraldehyde 3-phosphate to yield 1-deoxy-D-xylulose-5-phosphate (DXP). The chain is 1-deoxy-D-xylulose-5-phosphate synthase from Helicobacter pylori (strain HPAG1).